A 184-amino-acid polypeptide reads, in one-letter code: uncharacterized protein (184 aa).

The protein belongs to the TorD/DmsD family.

This is an uncharacterized protein from Haemophilus influenzae (strain ATCC 51907 / DSM 11121 / KW20 / Rd).